We begin with the raw amino-acid sequence, 364 residues long: tRNA 2-selenouridine synthase (364 aa).

One can recognise a Rhodanese domain in the interval 14–137 (LIADTPIIDV…LRQTAIQATI (124 aa)). The active-site S-selanylcysteine intermediate is cysteine 97.

It belongs to the SelU family. Monomer.

It catalyses the reaction 5-methylaminomethyl-2-thiouridine(34) in tRNA + selenophosphate + (2E)-geranyl diphosphate + H2O + H(+) = 5-methylaminomethyl-2-selenouridine(34) in tRNA + (2E)-thiogeraniol + phosphate + diphosphate. It carries out the reaction 5-methylaminomethyl-2-thiouridine(34) in tRNA + (2E)-geranyl diphosphate = 5-methylaminomethyl-S-(2E)-geranyl-thiouridine(34) in tRNA + diphosphate. The enzyme catalyses 5-methylaminomethyl-S-(2E)-geranyl-thiouridine(34) in tRNA + selenophosphate + H(+) = 5-methylaminomethyl-2-(Se-phospho)selenouridine(34) in tRNA + (2E)-thiogeraniol. The catalysed reaction is 5-methylaminomethyl-2-(Se-phospho)selenouridine(34) in tRNA + H2O = 5-methylaminomethyl-2-selenouridine(34) in tRNA + phosphate. Involved in the post-transcriptional modification of the uridine at the wobble position (U34) of tRNA(Lys), tRNA(Glu) and tRNA(Gln). Catalyzes the conversion of 2-thiouridine (S2U-RNA) to 2-selenouridine (Se2U-RNA). Acts in a two-step process involving geranylation of 2-thiouridine (S2U) to S-geranyl-2-thiouridine (geS2U) and subsequent selenation of the latter derivative to 2-selenouridine (Se2U) in the tRNA chain. The sequence is that of tRNA 2-selenouridine synthase from Escherichia coli O81 (strain ED1a).